The following is a 267-amino-acid chain: Probable 6-oxopurine nucleoside phosphorylase (267 aa).

Phosphate is bound by residues Ser-10, 50–51 (RH), and 83–84 (SA). Met-188 contributes to the substrate binding site. Thr-189 is a binding site for phosphate. Substrate is bound at residue 212–214 (NYA).

This sequence belongs to the PNP/MTAP phosphorylase family. MTAP subfamily. As to quaternary structure, homohexamer. Dimer of a homotrimer.

It carries out the reaction a purine D-ribonucleoside + phosphate = a purine nucleobase + alpha-D-ribose 1-phosphate. The enzyme catalyses guanosine + phosphate = alpha-D-ribose 1-phosphate + guanine. It catalyses the reaction inosine + phosphate = alpha-D-ribose 1-phosphate + hypoxanthine. It participates in purine metabolism; purine nucleoside salvage. Functionally, purine nucleoside phosphorylase which is highly specific for 6-oxopurine nucleosides. Cleaves guanosine or inosine to respective bases and sugar-1-phosphate molecules. Involved in purine salvage. This is Probable 6-oxopurine nucleoside phosphorylase from Thermococcus kodakarensis (strain ATCC BAA-918 / JCM 12380 / KOD1) (Pyrococcus kodakaraensis (strain KOD1)).